Consider the following 154-residue polypeptide: 3-dehydroquinate dehydratase (154 aa).

The Proton acceptor role is filled by tyrosine 23. Substrate-binding residues include asparagine 74, histidine 80, and aspartate 87. Residue histidine 100 is the Proton donor of the active site. Residues 101-102 (LS) and arginine 111 contribute to the substrate site.

This sequence belongs to the type-II 3-dehydroquinase family. As to quaternary structure, homododecamer.

The catalysed reaction is 3-dehydroquinate = 3-dehydroshikimate + H2O. The protein operates within metabolic intermediate biosynthesis; chorismate biosynthesis; chorismate from D-erythrose 4-phosphate and phosphoenolpyruvate: step 3/7. Functionally, catalyzes a trans-dehydration via an enolate intermediate. The protein is 3-dehydroquinate dehydratase of Actinobacillus pleuropneumoniae serotype 5b (strain L20).